We begin with the raw amino-acid sequence, 397 residues long: MKPLLVLLLLLLLDLAQAQGALHRVPLRRHQSLRKKLRAQGQLSEFWRSHNLDMTRLSESCNVYSSVNEPLINYLDMEYFGTISIGTPPQNFTVIFDTGSSNLWVPSVYCTSPACKAHPVFHPSQSDTYTEVGNHFSIQYGTGSLTGIIGADQVSVEGLTVDGQQFGESVKEPGQTFVNAEFDGILGLGYPSLAAGGVTPVFDNMMAQNLVALPMFSVYLSSDPQGGSGSELTFGGYDPSHFSGSLNWIPVTKQAYWQIALDGIQVGDTVMFCSEGCQAIVDTGTSLITGPPDKIKQLQEAIGATPIDGEYAVDCATLDTMPNVTFLINEVSYTLNPTDYILPDLVEGMQFCGSGFQGLDIPPPAGPLWILGDVFIRQFYSVFDRGNNQVGLAPAVP.

The N-terminal stretch at 1 to 20 (MKPLLVLLLLLLLDLAQAQG) is a signal peptide. The propeptide at 21-59 (ALHRVPLRRHQSLRKKLRAQGQLSEFWRSHNLDMTRLSE) is activation peptide. The Peptidase A1 domain occupies 79–393 (YFGTISIGTP…DRGNNQVGLA (315 aa)). Asn-91 is a glycosylation site (N-linked (GlcNAc...) asparagine). Asp-97 is a catalytic residue. 2 disulfides stabilise this stretch: Cys-110–Cys-115 and Cys-273–Cys-277. Asp-282 is a catalytic residue. Asn-323 carries an N-linked (GlcNAc...) asparagine glycan.

It belongs to the peptidase A1 family. In terms of assembly, homodimer; disulfide-linked. In terms of processing, glycosylated. The nature of the carbohydrate chain varies between cell types. In fibroblasts, the proenzyme contains a high mannose-type oligosaccharide, while the mature enzyme contains a complex-type oligosaccharide. As to expression, expressed abundantly in the stomach, club cells and alveolar macrophages of the lung, brain microglia, spleen and activated B-lymphocytes. Not expressed in resting B-lymphocytes.

It localises to the endosome. It catalyses the reaction Similar to cathepsin D, but slightly broader specificity.. In terms of biological role, may have a role in immune function. Probably involved in the processing of antigenic peptides during MHC class II-mediated antigen presentation. May play a role in activation-induced lymphocyte depletion in the thymus, and in neuronal degeneration and glial cell activation in the brain. This chain is Cathepsin E (Ctse), found in Mus musculus (Mouse).